Here is a 188-residue protein sequence, read N- to C-terminus: Acireductone dioxygenase 1 (188 aa).

Residues His-90, His-92, Glu-96, and His-135 each contribute to the Fe(2+) site. 4 residues coordinate Ni(2+): His-90, His-92, Glu-96, and His-135.

Belongs to the acireductone dioxygenase (ARD) family. The cofactor is Fe(2+). It depends on Ni(2+) as a cofactor.

It localises to the cytoplasm. The protein localises to the nucleus. The enzyme catalyses 1,2-dihydroxy-5-(methylsulfanyl)pent-1-en-3-one + O2 = 4-methylsulfanyl-2-oxobutanoate + formate + 2 H(+). It carries out the reaction 1,2-dihydroxy-5-(methylsulfanyl)pent-1-en-3-one + O2 = 3-(methylsulfanyl)propanoate + CO + formate + 2 H(+). It participates in amino-acid biosynthesis; L-methionine biosynthesis via salvage pathway; L-methionine from S-methyl-5-thio-alpha-D-ribose 1-phosphate: step 5/6. In terms of biological role, catalyzes 2 different reactions between oxygen and the acireductone 1,2-dihydroxy-3-keto-5-methylthiopentene (DHK-MTPene) depending upon the metal bound in the active site. Fe-containing acireductone dioxygenase (Fe-ARD) produces formate and 2-keto-4-methylthiobutyrate (KMTB), the alpha-ketoacid precursor of methionine in the methionine recycle pathway. Ni-containing acireductone dioxygenase (Ni-ARD) produces methylthiopropionate, carbon monoxide and formate, and does not lie on the methionine recycle pathway. The sequence is that of Acireductone dioxygenase 1 from Vitis vinifera (Grape).